A 307-amino-acid chain; its full sequence is Aspartate carbamoyltransferase catalytic subunit (307 aa).

Carbamoyl phosphate is bound by residues arginine 58 and threonine 59. L-aspartate is bound at residue lysine 86. Carbamoyl phosphate is bound by residues arginine 108, histidine 138, and glutamine 141. The L-aspartate site is built by arginine 171 and arginine 223. 2 residues coordinate carbamoyl phosphate: alanine 264 and proline 265.

The protein belongs to the aspartate/ornithine carbamoyltransferase superfamily. ATCase family. Heterododecamer (2C3:3R2) of six catalytic PyrB chains organized as two trimers (C3), and six regulatory PyrI chains organized as three dimers (R2).

It carries out the reaction carbamoyl phosphate + L-aspartate = N-carbamoyl-L-aspartate + phosphate + H(+). Its pathway is pyrimidine metabolism; UMP biosynthesis via de novo pathway; (S)-dihydroorotate from bicarbonate: step 2/3. Functionally, catalyzes the condensation of carbamoyl phosphate and aspartate to form carbamoyl aspartate and inorganic phosphate, the committed step in the de novo pyrimidine nucleotide biosynthesis pathway. The chain is Aspartate carbamoyltransferase catalytic subunit from Streptococcus suis (strain 98HAH33).